Consider the following 128-residue polypeptide: Large ribosomal subunit protein bL19 (128 aa).

This sequence belongs to the bacterial ribosomal protein bL19 family.

In terms of biological role, this protein is located at the 30S-50S ribosomal subunit interface and may play a role in the structure and function of the aminoacyl-tRNA binding site. In Paraburkholderia xenovorans (strain LB400), this protein is Large ribosomal subunit protein bL19.